The chain runs to 502 residues: Ribose import ATP-binding protein RbsA (502 aa).

ABC transporter domains lie at 3–239 (VTMR…VGRE) and 249–493 (AAPG…TGGA). Residue 35-42 (GENGAGKS) participates in ATP binding.

It belongs to the ABC transporter superfamily. Ribose importer (TC 3.A.1.2.1) family. In terms of assembly, the complex is composed of an ATP-binding protein (RbsA), two transmembrane proteins (RbsC) and a solute-binding protein (RbsB).

It localises to the cell inner membrane. It carries out the reaction D-ribose(out) + ATP + H2O = D-ribose(in) + ADP + phosphate + H(+). Part of the ABC transporter complex RbsABC involved in ribose import. Responsible for energy coupling to the transport system. The polypeptide is Ribose import ATP-binding protein RbsA (Chromobacterium violaceum (strain ATCC 12472 / DSM 30191 / JCM 1249 / CCUG 213 / NBRC 12614 / NCIMB 9131 / NCTC 9757 / MK)).